Reading from the N-terminus, the 177-residue chain is Large ribosomal subunit protein uL10 (177 aa).

This sequence belongs to the universal ribosomal protein uL10 family. In terms of assembly, part of the ribosomal stalk of the 50S ribosomal subunit. The N-terminus interacts with L11 and the large rRNA to form the base of the stalk. The C-terminus forms an elongated spine to which L12 dimers bind in a sequential fashion forming a multimeric L10(L12)X complex.

Its function is as follows. Forms part of the ribosomal stalk, playing a central role in the interaction of the ribosome with GTP-bound translation factors. In Legionella pneumophila (strain Paris), this protein is Large ribosomal subunit protein uL10.